Reading from the N-terminus, the 647-residue chain is A-type voltage-gated potassium channel KCND1 (647 aa).

The Cytoplasmic segment spans residues 1–183; sequence MAAGLATWLP…RAFENPHTST (183 aa). The tract at residues 2 to 20 is interaction with KCNIP1, KCNIP2, and other family members; sequence AAGLATWLPFARAAAVGWL. 3 residues coordinate Zn(2+): His104, Cys131, and Cys132. A disordered region spans residues 144–163; it reads AERLAEDEEAEQAGDGPALP. Residues 184 to 205 form a helical membrane-spanning segment; that stretch reads AALVFYYVTGFFIAVSVIANVV. The Extracellular portion of the chain corresponds to 206-230; the sequence is ETIPCRGSARRSSREQPCGERFPQA. Residues 231–252 form a helical membrane-spanning segment; the sequence is FFCMDTACVLIFTGEYLLRLFA. Over 253-263 the chain is Cytoplasmic; that stretch reads APSRCRFLRSV. The chain crosses the membrane as a helical span at residues 264–284; that stretch reads MSLIDVVAILPYYIGLLVPKN. Residues 285 to 287 are Extracellular-facing; sequence DDV. A helical; Voltage-sensor transmembrane segment spans residues 288–308; that stretch reads SGAFVTLRVFRVFRIFKFSRH. The Cytoplasmic segment spans residues 309 to 323; sequence SQGLRILGYTLKSCA. The tract at residues 310-323 is S4-S5 linker; the sequence is QGLRILGYTLKSCA. A helical membrane pass occupies residues 324–345; the sequence is SELGFLLFSLTMAIIIFATVMF. Topologically, residues 346–359 are extracellular; the sequence is YAEKGTNKTNFTSI. 2 N-linked (GlcNAc...) asparagine glycosylation sites follow: Asn352 and Asn355. An intramembrane region (helical) is located at residues 360–371; sequence PAAFWYTIVTMT. Positions 372 to 377 match the Selectivity filter motif; it reads TLGYGD. The stretch at 372-379 is an intramembrane region; it reads TLGYGDMV. Residues 380-386 lie on the Extracellular side of the membrane; the sequence is PSTIAGK. Residues 387-415 traverse the membrane as a helical segment; sequence IFGSICSLSGVLVIALPVPVIVSNFSRIY. Residues 416–647 lie on the Cytoplasmic side of the membrane; the sequence is HQNQRADKRR…FPETVKISSL (232 aa). The residue at position 458 (Ser458) is a Phosphoserine. The required for dendritic targeting stretch occupies residues 474-489; the sequence is FEQQHHHLLHCLEKTT. Residues 506 to 524 are compositionally biased toward low complexity; sequence VSPGGRTSRSTSVSSQPVG. Residues 506-531 form a disordered region; the sequence is VSPGGRTSRSTSVSSQPVGPGSLLSS. A Phosphoserine modification is found at Ser555. The interval 601-634 is disordered; that stretch reads IPTPPANTPDESQPSSPGGGGRAGSTLRNSSLGT.

This sequence belongs to the potassium channel family. D (Shal) (TC 1.A.1.2) subfamily. Kv4.1/KCND1 sub-subfamily. As to quaternary structure, component of heteromultimeric potassium channels. Identified in potassium channel complexes containing KCND1, KCND2, KCND3, KCNIP1, KCNIP2, KCNIP3, KCNIP4, DPP6 and DPP10. As to expression, widely expressed. Highly expressed in brain, in particular in cerebellum and thalamus; detected at lower levels in the other parts of the brain.

The protein resides in the cell membrane. The enzyme catalyses K(+)(in) = K(+)(out). Its function is as follows. A-type voltage-gated potassium channel that mediates transmembrane potassium transport in excitable membranes in the brain. Mediates A-type current I(SA) in suprachiasmatic nucleus (SCN) neurons. Exhibits a low-threshold A-type current with a hyperpolarized steady-state inactivation midpoint and the recovery process was steeply voltage-dependent, with recovery being markedly faster at more negative potentials. May regulates repetitive firing rates in the suprachiasmatic nucleus (SCN) neurons and circadian rhythms in neuronal excitability and behavior. Contributes to the regulation of the circadian rhythm of action potential firing in suprachiasmatic nucleus neurons, which regulates the circadian rhythm of locomotor activity. The regulatory subunit KCNIP1 modulates the kinetics of channel inactivation, increases the current amplitudes and accelerates recovery from inactivation, shifts activation in a depolarizing direction. The regulatory subunit DPP10 decreases the voltage sensitivity of the inactivation channel gating. In Homo sapiens (Human), this protein is A-type voltage-gated potassium channel KCND1.